The primary structure comprises 218 residues: Thiopurine S-methyltransferase (218 aa).

S-adenosyl-L-methionine contacts are provided by W10, L45, E66, and R123.

This sequence belongs to the class I-like SAM-binding methyltransferase superfamily. TPMT family.

The protein localises to the cytoplasm. It catalyses the reaction S-adenosyl-L-methionine + a thiopurine = S-adenosyl-L-homocysteine + a thiopurine S-methylether.. In Pseudomonas aeruginosa (strain ATCC 15692 / DSM 22644 / CIP 104116 / JCM 14847 / LMG 12228 / 1C / PRS 101 / PAO1), this protein is Thiopurine S-methyltransferase.